Here is a 307-residue protein sequence, read N- to C-terminus: Probable rRNA-processing protein EBP2 homolog (307 aa).

Disordered regions lie at residues 1–22 (MSDF…SDAE), 189–208 (QRKM…EAEK), and 236–307 (ESKQ…KGRK). The stretch at 205-252 (EAEKKDMLDKLKKFRKGKLKNLDFLEDAKALESKQKQSAENRKKRNKK) forms a coiled coil. Basic and acidic residues predominate over residues 236-245 (ESKQKQSAEN). Basic residues-rich tracts occupy residues 246-266 (RKKR…KRNT) and 294-307 (RLGK…KGRK).

The protein belongs to the EBP2 family.

The protein resides in the nucleus. It localises to the nucleolus. Functionally, required for the processing of the 27S pre-rRNA. This chain is Probable rRNA-processing protein EBP2 homolog, found in Drosophila melanogaster (Fruit fly).